A 400-amino-acid polypeptide reads, in one-letter code: MKRQAKPPEKKTKRTTNASSPTPSSSSPSLSSLPDEIVENCLARISRSYYPTLSIVSKSFRSIISSTELYVARSHLRNTEECVYVCLSDKSFEFPKWFTLWVNPNQANSMVEKKRKKKKTIGKLLVPIPSSNLSPVSKSAIAVGSEIYVIGGKVDGALSSAVRILDCRSNTWRDAPSMTVARKRPFICLYDGKIYVIGGYNKLSESEPWAEVFDIKTQTWECLSDPGTEIRNCTIYRIAEIEGKIHFGYTQKTYAYDPKQGEWECCEGEVAFPRSQCVMESVLYTFANNYTWEDDYGCKWWSTDGYGEKVKGLESLLEIHKRNGGSSDNTTKLVACGGKLLLLWEGYMKHNPNNRKKIWCAVIALEKRDGGKVWGIVEWVDVVHIVPTSCKLLHCLVVSV.

Positions 1–10 are enriched in basic and acidic residues; it reads MKRQAKPPEK. A disordered region spans residues 1–33; that stretch reads MKRQAKPPEKKTKRTTNASSPTPSSSSPSLSSL. The span at 19–33 shows a compositional bias: low complexity; sequence SSPTPSSSSPSLSSL. The 47-residue stretch at 27–73 folds into the F-box domain; the sequence is SPSLSSLPDEIVENCLARISRSYYPTLSIVSKSFRSIISSTELYVAR. Kelch repeat units lie at residues 146 to 192, 194 to 240, and 242 to 284; these read EIYV…LYDG, IYVI…RIAE, and EGKI…SVLY.

In Arabidopsis thaliana (Mouse-ear cress), this protein is F-box/kelch-repeat protein At4g19870.